Consider the following 363-residue polypeptide: NAD-dependent epimerase/dehydratase tndE (363 aa).

Residues 10–30 form a helical membrane-spanning segment; that stretch reads GLVLITGVNGFLASHLALQLI. Tyr-176 is an NADP(+) binding site.

Belongs to the NAD(P)-dependent epimerase/dehydratase family. Dihydroflavonol-4-reductase subfamily.

The protein resides in the membrane. The protein operates within secondary metabolite biosynthesis; terpenoid biosynthesis. Its function is as follows. NAD-dependent epimerase/dehydratase; part of the gene cluster that mediates the biosynthesis of talaronoid C, a fusicoccane diterpenoid with an unprecedented tricyclic 5/8/6 ring system. The first step in the pathway is performed by the fusicoccadiene synthase tndC that possesses both prenyl transferase and terpene cyclase activity, converting isopentenyl diphosphate and dimethylallyl diphosphate into geranylgeranyl diphosphate (GGDP) and further converting GGDP into talarodiene, a precursor for talaronoid C. The remaining enzymes from the cluster include the cytochrome P450 monooxygenase tndB, the aldehyde reductase tndE and the alcohol dehydrogenase tndF that are involved in the conversion of talarodiene into talaronoid C. The sequence is that of NAD-dependent epimerase/dehydratase tndE from Aspergillus flavipes.